The chain runs to 86 residues: Weak toxin 1 (86 aa).

Residues 1–23 form the signal peptide; the sequence is MKTLLLTLVVVAIVCLDLGYTLT. Intrachain disulfides connect Cys24/Cys45, Cys27/Cys32, Cys38/Cys63, Cys67/Cys78, and Cys79/Cys84.

The protein belongs to the three-finger toxin family. Ancestral subfamily. Orphan group II sub-subfamily. In terms of tissue distribution, expressed by the venom gland.

It is found in the secreted. In terms of biological role, binds with low affinity to muscular (alpha-1-beta-1-delta-epsilon/CHRNA1-CHRNB1-CHRND-CHRNE) and very low affinity to neuronal (alpha-7/CHRNA7) nicotinic acetylcholine receptor (nAChR). The chain is Weak toxin 1 from Bungarus candidus (Malayan krait).